The following is a 264-amino-acid chain: MDMREVYVVAGSFVGFQLFFSCVSPVLSSNFTQGYGKLPPNKLNDWNSRLVSTVHALIVGLFCLYILWYDDAVNEDPVWGDPNLVKLNVAITCGYLFYDLLLLACNWSTMGDVFFVCHHLAALYAYGYVLTRGVLPYFANFRLISELSTPFVNQRWFFEALAYPRTHQLVVANGIAMAVVFFLVRIAVMPPYWAKVFGIIYSPTFEKLGLAIQVAWIISCVCLDILNIIWMYKIARGCYKVITGKLKGRKADSKKTTCVNNHTD.

Transmembrane regions (helical) follow at residues 6–26 (VYVV…VSPV), 50–70 (LVST…LWYD), 84–104 (LVKL…LLLA), 110–130 (MGDV…GYVL), 169–189 (LVVA…IAVM), and 210–230 (LAIQ…NIIW). The region spanning 41-243 (NKLNDWNSRL…IARGCYKVIT (203 aa)) is the TLC domain.

It belongs to the TLCD4 family.

It is found in the membrane. This chain is TLC domain-containing protein 4-B (tlcd4b), found in Danio rerio (Zebrafish).